Here is a 173-residue protein sequence, read N- to C-terminus: Large ribosomal subunit protein bL9 (173 aa).

A disordered region spans residues 151–173; sequence YDDTPDRTETEESTKELQEEHAE.

Belongs to the bacterial ribosomal protein bL9 family.

Functionally, binds to the 23S rRNA. This Lawsonia intracellularis (strain PHE/MN1-00) protein is Large ribosomal subunit protein bL9.